The primary structure comprises 323 residues: Elongation factor P--(R)-beta-lysine ligase (323 aa).

S74 to E76 contacts substrate. ATP is bound by residues R98 to E100 and N107. Y116 lines the substrate pocket. E242 to L243 serves as a coordination point for ATP. Residue E249 coordinates substrate. G298 lines the ATP pocket.

Belongs to the class-II aminoacyl-tRNA synthetase family. EpmA subfamily. Homodimer.

The catalysed reaction is D-beta-lysine + L-lysyl-[protein] + ATP = N(6)-((3R)-3,6-diaminohexanoyl)-L-lysyl-[protein] + AMP + diphosphate + H(+). With EpmB is involved in the beta-lysylation step of the post-translational modification of translation elongation factor P (EF-P). Catalyzes the ATP-dependent activation of (R)-beta-lysine produced by EpmB, forming a lysyl-adenylate, from which the beta-lysyl moiety is then transferred to the epsilon-amino group of a conserved specific lysine residue in EF-P. The protein is Elongation factor P--(R)-beta-lysine ligase of Photobacterium profundum (strain SS9).